Here is a 392-residue protein sequence, read N- to C-terminus: MTSLQILADANIPRVEDAFGQFGTVRRMPGREMTTSDVAAADVLLVRSVTPVGPALLDGTPLRFVGSATIGTDHVDRDYLRAQGIPFAHAPGSNADSVADYVVAALLGLARRRGGALEERTVGIVGCGNIGGRLARRLSALGMEVLRNDPPRARAADADGTGHGFVPLDTVLGAADVVTLHVPLKASGPDPTHHLVDAAFLDRLGDGAWLLNTSRGAVVDGDALLAARRRGDVAAAVLDVWENEPSPDPALIEAVDLATPHIAGYAYDGKVRGTEMLYEALCDALGGEARWAGTDAIRPASADALRGRAPDPRLSATEWRFELARQAYDPAVDDASLRDLVKLGPDARGEAFAHLRAGYRRRREMQQHTVPGTAVPAEHEQAVTEGLKMKLD.

Residues serine 48 and threonine 69 each coordinate substrate. Position 149 (aspartate 149) interacts with NAD(+). Arginine 215 is a catalytic residue. Aspartate 239 is a binding site for NAD(+). Residue glutamate 244 is part of the active site. Histidine 261 functions as the Proton donor in the catalytic mechanism. Glycine 264 contributes to the NAD(+) binding site. Tyrosine 265 contacts substrate.

It belongs to the D-isomer specific 2-hydroxyacid dehydrogenase family. PdxB subfamily. As to quaternary structure, homodimer.

It localises to the cytoplasm. The enzyme catalyses 4-phospho-D-erythronate + NAD(+) = (R)-3-hydroxy-2-oxo-4-phosphooxybutanoate + NADH + H(+). It participates in cofactor biosynthesis; pyridoxine 5'-phosphate biosynthesis; pyridoxine 5'-phosphate from D-erythrose 4-phosphate: step 2/5. In terms of biological role, catalyzes the oxidation of erythronate-4-phosphate to 3-hydroxy-2-oxo-4-phosphonooxybutanoate. This Salinibacter ruber (strain DSM 13855 / M31) protein is Erythronate-4-phosphate dehydrogenase.